The primary structure comprises 204 residues: uncharacterized protein (204 aa).

It is found in the mitochondrion. This is an uncharacterized protein from Arabidopsis thaliana (Mouse-ear cress).